The chain runs to 213 residues: Protein-L-isoaspartate O-methyltransferase (213 aa).

The active site involves Ser-60.

The protein belongs to the methyltransferase superfamily. L-isoaspartyl/D-aspartyl protein methyltransferase family.

It is found in the cytoplasm. It carries out the reaction [protein]-L-isoaspartate + S-adenosyl-L-methionine = [protein]-L-isoaspartate alpha-methyl ester + S-adenosyl-L-homocysteine. In terms of biological role, catalyzes the methyl esterification of L-isoaspartyl residues in peptides and proteins that result from spontaneous decomposition of normal L-aspartyl and L-asparaginyl residues. It plays a role in the repair and/or degradation of damaged proteins. The chain is Protein-L-isoaspartate O-methyltransferase from Roseobacter denitrificans (strain ATCC 33942 / OCh 114) (Erythrobacter sp. (strain OCh 114)).